We begin with the raw amino-acid sequence, 344 residues long: DnaJ homolog subfamily C member 25 (344 aa).

A helical transmembrane segment spans residues 5–25; it reads WVLLVALSVLFLSGRAGALTE. The 76-residue stretch at 33-108 folds into the J domain; the sequence is VCYDVLGVSR…ETRKDYDYML (76 aa). The next 2 membrane-spanning stretches (helical) occupy residues 134-154 and 228-248; these read IVIL…WWSS and ILLF…SWYV.

It belongs to the DNAJC25 family.

It is found in the membrane. This Xenopus laevis (African clawed frog) protein is DnaJ homolog subfamily C member 25 (dnajc25).